We begin with the raw amino-acid sequence, 1327 residues long: uncharacterized protein (1327 aa).

Tryptophan 884–aspartate 885 is a substrate binding site. Glutamate 1023 functions as the Proton donor in the catalytic mechanism. Residue lysine 1143–glutamine 1144 participates in substrate binding.

It in the N-terminal section; belongs to the trehalose phosphatase family. This sequence in the C-terminal section; belongs to the glycosyl hydrolase 65 family.

This is an uncharacterized protein from Mycobacterium tuberculosis (strain CDC 1551 / Oshkosh).